The sequence spans 311 residues: Pyrimidine-specific ribonucleoside hydrolase RihA (311 aa).

His-240 is an active-site residue.

This sequence belongs to the IUNH family. RihA subfamily.

In terms of biological role, hydrolyzes cytidine or uridine to ribose and cytosine or uracil, respectively. The chain is Pyrimidine-specific ribonucleoside hydrolase RihA from Salmonella agona (strain SL483).